The primary structure comprises 1200 residues: ATP-dependent helicase/deoxyribonuclease subunit B (1200 aa).

It belongs to the helicase family. AddB/RexB type 2 subfamily. Heterodimer of AddA and RexB. Requires Mg(2+) as cofactor.

Functionally, the heterodimer acts as both an ATP-dependent DNA helicase and an ATP-dependent, dual-direction single-stranded exonuclease. Recognizes the chi site generating a DNA molecule suitable for the initiation of homologous recombination. This subunit has 5' -&gt; 3' nuclease activity but not helicase activity. The chain is ATP-dependent helicase/deoxyribonuclease subunit B from Lactiplantibacillus plantarum (strain ATCC BAA-793 / NCIMB 8826 / WCFS1) (Lactobacillus plantarum).